The chain runs to 827 residues: Striatin homolog (827 aa).

Residues 37-109 adopt a coiled-coil conformation; the sequence is RAHWISEKAE…VEEEEEEDDK (73 aa). Disordered regions lie at residues 99-123, 181-270, 311-362, and 400-459; these read KVEEEEEEDDKIPKNREPPKKSKDN, KDIN…QLQS, SSVS…DEQS, and EEGN…SELM. The span at 109 to 123 shows a compositional bias: basic and acidic residues; the sequence is KIPKNREPPKKSKDN. 2 stretches are compositionally biased toward low complexity: residues 184 to 270 and 311 to 334; these read NNNN…QLQS and SSVSSNSGNNSINSSSDSLDTSKQ. The segment covering 337–346 has biased composition (polar residues); that stretch reads EDPNNVTISK. Low complexity-rich tracts occupy residues 347-356, 416-432, and 439-453; these read QQQQEQQQQQ, TPTTKSSSSSSSSSTGS, and SSSSSSGSSSSNSNT. WD repeat units lie at residues 495-534, 548-593, 610-649, 709-748, 751-790, and 797-827; these read SHFDGVRSIQFHPNEPIMISASEDNSIKVWNLNHLVPTKK, GHTG…IDSY, GHQDGIWDLLSIPNTPNLLSSSADGTVSLWNTTTSEQLYT, NNNSQINKIVSHPFMPLAMTGSEDHKIEFFDLNSNTVVHS, AHSNSISSLTIDPSGLYIASCAHDSSIRFWDISSKTCIQD, and KYDESIHCIKYHPNKGYFASGGADSVIRILN.

Belongs to the WD repeat striatin family. As to quaternary structure, part of the core of STRIPAK complexes.

The protein localises to the cytoplasm. It localises to the membrane. Its function is as follows. Calmodulin-binding scaffolding protein which is the center of the striatin-interacting phosphatase and kinase (STRIPAK) complexes. STRIPAK complexes have critical roles in protein (de)phosphorylation and are regulators of multiple signaling pathways including Hippo, MAPK, nuclear receptor and cytoskeleton remodeling. Different types of STRIPAK complexes are involved in a variety of biological processes such as cell growth, differentiation, apoptosis, metabolism and immune regulation. This is Striatin homolog (strn) from Dictyostelium discoideum (Social amoeba).